The primary structure comprises 457 residues: Multidrug resistance protein MdtK (457 aa).

Helical transmembrane passes span 11 to 31 (LLAL…MGFV), 53 to 73 (IWLP…PVVA), 93 to 113 (WLAG…GYII), 127 to 147 (AVGY…FQVA), 160 to 180 (GMVM…IFIY), 191 to 211 (VGCG…MLWW), 243 to 263 (LPIA…ALLV), 276 to 296 (IALN…AAVT), 316 to 336 (RTGV…TVLM), 357 to 377 (LMLL…GSGI), 387 to 407 (IFFI…YLLA), and 418 to 438 (PAGF…MMML).

The protein belongs to the multi antimicrobial extrusion (MATE) (TC 2.A.66.1) family. MdtK subfamily.

It is found in the cell inner membrane. Functionally, multidrug efflux pump that functions probably as a Na(+)/drug antiporter. This Klebsiella pneumoniae subsp. pneumoniae (strain ATCC 700721 / MGH 78578) protein is Multidrug resistance protein MdtK.